We begin with the raw amino-acid sequence, 77 residues long: Defensin-like protein 161 (77 aa).

A signal peptide spans 1–27; sequence MAKLSCSYLLVFMLVFSAILMVEKVEG. 4 disulfide bridges follow: Cys-30-Cys-77, Cys-40-Cys-59, Cys-45-Cys-71, and Cys-49-Cys-73.

The protein belongs to the DEFL family.

It is found in the secreted. The sequence is that of Defensin-like protein 161 (LCR27) from Arabidopsis thaliana (Mouse-ear cress).